The sequence spans 63 residues: Glutamine synthetase translation inhibitor (63 aa).

Functionally, inhibits the synthesis of glutamine synthetase II. The polypeptide is Glutamine synthetase translation inhibitor (gstI) (Rhizobium leguminosarum).